Reading from the N-terminus, the 84-residue chain is Esculentin-1Vb (84 aa).

Positions 1-22 (MFTLKKPLLLIVLLGIISLSLC) are cleaved as a signal peptide. Positions 23–36 (EQERNADEDEESET) are excised as a propeptide. C78 and C84 are joined by a disulfide.

Expressed by the skin glands.

Its subcellular location is the secreted. Antimicrobial peptide. This is Esculentin-1Vb from Odorrana versabilis (Chinese bamboo leaf odorous frog).